The chain runs to 611 residues: Autophagy-related protein 22-2 (611 aa).

Residues 1-24 (MRADDNPSARSLHAQFPGDDTRPT) form a disordered region. The chain crosses the membrane as a helical span at residues 35–55 (YGWAAEVFTVCAMGSFLPITL). Asn78 carries N-linked (GlcNAc...) asparagine glycosylation. 3 helical membrane passes run 116–136 (TASFAMYTFSVSVFVQAVLII), 151–171 (LLVAFAVIGSVCTMLFLSVVP), and 175–195 (IVGALFAIVANTCFGASFVLL). An N-linked (GlcNAc...) asparagine glycan is attached at Asn221. Helical transmembrane passes span 286–306 (IGIGYIGAVILQIICILVIIA) and 316–336 (LVLFLIGLWWFVFTIPAALWL). An N-linked (GlcNAc...) asparagine glycan is attached at Asn353. 6 consecutive transmembrane segments (helical) span residues 380-400 (ILLFLTAWFLLSDGIATVSGT), 414-434 (AALGLINVVTMMAGVFGAFSW), 449-469 (IIACILLFELIPIYGLLGFVP), 483-503 (WEMFPLGIVYGLVMGGLSSYC), 521-541 (ALYAITDKGSSIFGPAIVGLI), and 551-571 (AFVFLAVLIFLPLPLMLLVDV).

It belongs to the ATG22 family.

The protein localises to the vacuole membrane. Its function is as follows. Vacuolar effluxer which mediate the efflux of amino acids resulting from autophagic degradation. The release of autophagic amino acids allows the maintenance of protein synthesis and viability during nitrogen starvation. This Aspergillus clavatus (strain ATCC 1007 / CBS 513.65 / DSM 816 / NCTC 3887 / NRRL 1 / QM 1276 / 107) protein is Autophagy-related protein 22-2 (atg22-2).